The chain runs to 386 residues: Methionine aminopeptidase 1 (386 aa).

Ala2 carries the N-acetylalanine modification. The segment at 6-59 (TRVCETDGCSSEAKLQCPTCIKLGIQGSYFCSQECFKGSWATHKLLHKKAKDEK) adopts a C6H2-type zinc-finger fold. The Zn(2+) site is built by Cys9, Cys14, Cys22, Cys25, Cys36, Cys40, His48, and His52. His203 contributes to the a protein binding site. Zn(2+) is bound by residues Asp220, Asp231, and His294. His301 contributes to the a protein binding site. Zn(2+) is bound by residues Glu327 and Glu358.

The protein belongs to the peptidase M24A family. Methionine aminopeptidase type 1 subfamily. Associates with the 60S ribosomal subunit of the 80S translational complex. It depends on Zn(2+) as a cofactor. Co(2+) serves as cofactor. The cofactor is Mn(2+). Requires Fe(2+) as cofactor.

Its subcellular location is the cytoplasm. It catalyses the reaction Release of N-terminal amino acids, preferentially methionine, from peptides and arylamides.. In terms of biological role, cotranslationally removes the N-terminal methionine from nascent proteins. The N-terminal methionine is often cleaved when the second residue in the primary sequence is small and uncharged (Met-Ala-, Cys, Gly, Pro, Ser, Thr, or Val). In Pongo abelii (Sumatran orangutan), this protein is Methionine aminopeptidase 1 (METAP1).